The sequence spans 567 residues: Phosphoglucomutase-like protein 5 (567 aa).

A disordered region spans residues 1 to 26; it reads MEGSPIPVLTVPTAPYEDQRPTGGGG. T120 carries the post-translational modification Phosphothreonine. S122 bears the Phosphoserine mark.

Belongs to the phosphohexose mutase family. In terms of assembly, interacts with DMD/dystrophin; the interaction is direct. Interacts with UTRN/utrophin.

Its subcellular location is the cell junction. It is found in the adherens junction. The protein resides in the cytoplasm. The protein localises to the cytoskeleton. It localises to the cell membrane. Its subcellular location is the sarcolemma. In terms of biological role, component of adherens-type cell-cell and cell-matrix junctions. Has no phosphoglucomutase activity in vitro. This Mus musculus (Mouse) protein is Phosphoglucomutase-like protein 5.